Reading from the N-terminus, the 251-residue chain is UPF0246 protein PEPE_1842 (251 aa).

Belongs to the UPF0246 family.

The polypeptide is UPF0246 protein PEPE_1842 (Pediococcus pentosaceus (strain ATCC 25745 / CCUG 21536 / LMG 10740 / 183-1w)).